The sequence spans 345 residues: Myb/SANT-like DNA-binding domain-containing protein 4 (345 aa).

One can recognise a Myb-like domain in the interval 4–77 (LKRKRKSNFS…EVKRRYLDWR (74 aa)). Residue K9 forms a Glycyl lysine isopeptide (Lys-Gly) (interchain with G-Cter in SUMO2) linkage. S106 is modified (phosphoserine). Residues K114 and K142 each participate in a glycyl lysine isopeptide (Lys-Gly) (interchain with G-Cter in SUMO2) cross-link. The disordered stretch occupies residues 141 to 160 (VKVEEEERDPQSPEFEIEEE). At T188 the chain carries Phosphothreonine. Residues 203–345 (LLVNIEKQKL…LRIQKEGHLQ (143 aa)) adopt a coiled-coil conformation. Residues K237, K254, and K273 each participate in a glycyl lysine isopeptide (Lys-Gly) (interchain with G-Cter in SUMO2) cross-link.

This Bos taurus (Bovine) protein is Myb/SANT-like DNA-binding domain-containing protein 4 (MSANTD4).